The primary structure comprises 649 residues: Pesticidal crystal protein Cry3Ca (649 aa).

The segment covering 1–13 has biased composition (basic and acidic residues); that stretch reads MNPNNRSEHDTIK. Positions 1-29 are disordered; that stretch reads MNPNNRSEHDTIKATENNEVSNNHAQYPL. The segment covering 14–25 has biased composition (polar residues); sequence ATENNEVSNNHA.

It belongs to the delta endotoxin family.

Its function is as follows. Promotes colloidosmotic lysis by binding to the midgut epithelial cells of Coleoptera. This chain is Pesticidal crystal protein Cry3Ca (cry3Ca), found in Bacillus thuringiensis subsp. kurstaki.